The chain runs to 100 residues: Protein MEN-8 (100 aa).

Positions 1-33 (MANNMKSATFCKATWAIFLVALAILVQLKGSEA) are cleaved as a signal peptide. 4 disulfides stabilise this stretch: C38/C76, C48/C65, C66/C91, and C78/C98.

It belongs to the A9/FIL1 family.

It localises to the secreted. This chain is Protein MEN-8 (MEN-8), found in Silene latifolia (White campion).